A 204-amino-acid chain; its full sequence is FMN-dependent NADH:quinone oxidoreductase 2 (204 aa).

FMN is bound by residues S10 and 16 to 18 (SIS).

The protein belongs to the azoreductase type 1 family. As to quaternary structure, homodimer. FMN serves as cofactor.

The catalysed reaction is 2 a quinone + NADH + H(+) = 2 a 1,4-benzosemiquinone + NAD(+). The enzyme catalyses N,N-dimethyl-1,4-phenylenediamine + anthranilate + 2 NAD(+) = 2-(4-dimethylaminophenyl)diazenylbenzoate + 2 NADH + 2 H(+). In terms of biological role, quinone reductase that provides resistance to thiol-specific stress caused by electrophilic quinones. Functionally, also exhibits azoreductase activity. Catalyzes the reductive cleavage of the azo bond in aromatic azo compounds to the corresponding amines. In Jannaschia sp. (strain CCS1), this protein is FMN-dependent NADH:quinone oxidoreductase 2.